Here is a 353-residue protein sequence, read N- to C-terminus: Divinyl chlorophyll a/b light-harvesting protein PcbG (353 aa).

6 helical membrane-spanning segments follow: residues phenylalanine 28–leucine 48, glycine 64–phenylalanine 84, leucine 90–leucine 110, isoleucine 204–leucine 224, phenylalanine 244–cysteine 264, and leucine 308–leucine 328.

This sequence belongs to the PsbB/PsbC family. IsiA/Pcb subfamily. The antenna complex consists of divinyl chlorophylls (a and b) and divinyl chlorophyll a/b binding proteins and binds more divinyl chlorophyll b than does the antenna complex from high-light-adapted Prochlorococcus. Also forms complexes with PSI, consisting of a PSI trimer with surrounded by a PcbG ring (probably with 18 subunits). Is the only subunit found in this ring under iron-replete conditions. Divinyl chlorophyll a serves as cofactor. Requires divinyl chlorophyll b as cofactor.

It is found in the cellular thylakoid membrane. The antenna complex functions as a light receptor, it captures and delivers excitation energy to photosystems I. The Prochlorales pcb genes are not related to higher plant LHCs. The polypeptide is Divinyl chlorophyll a/b light-harvesting protein PcbG (pcbG) (Prochlorococcus marinus (strain SARG / CCMP1375 / SS120)).